The following is a 122-amino-acid chain: Large ribosomal subunit protein uL14c (122 aa).

The protein belongs to the universal ribosomal protein uL14 family. In terms of assembly, part of the 50S ribosomal subunit.

It localises to the plastid. The protein resides in the chloroplast. Binds to 23S rRNA. This Tupiella akineta (Green alga) protein is Large ribosomal subunit protein uL14c.